The following is a 736-amino-acid chain: Eukaryotic translation initiation factor 3 subunit B (736 aa).

A sufficient for interaction with HCR1 and TIF32 region spans residues 1–94 (MAAVFDDIRL…LFIEFEDAGA (94 aa)). Residues 1–219 (MAAVFDDIRL…GIASWGGPQF (219 aa)) form a sufficient for interaction with PIC8 region. Residues 37-120 (RYVVVDGAPV…HRLWVNGLDD (84 aa)) enclose the RRM domain. WD repeat units follow at residues 140 to 182 (EFEA…PENV), 186 to 224 (RRNW…RLRR), 226 to 244 (AHPD…YLVT), 245 to 284 (FSSE…CVKT), 288 to 328 (PPQQ…QLLG), 332 to 375 (MKIE…QSCK), 443 to 483 (EIKD…VSFY), 511 to 557 (AIDG…TEKI), 566 to 604 (ATLR…KAEN), and 616 to 662 (VREE…QDAM).

This sequence belongs to the eIF-3 subunit B family. As to quaternary structure, component of the eukaryotic translation initiation factor 3 (eIF-3) complex.

It localises to the cytoplasm. RNA-binding component of the eukaryotic translation initiation factor 3 (eIF-3) complex, which is involved in protein synthesis of a specialized repertoire of mRNAs and, together with other initiation factors, stimulates binding of mRNA and methionyl-tRNAi to the 40S ribosome. The eIF-3 complex specifically targets and initiates translation of a subset of mRNAs involved in cell proliferation. The chain is Eukaryotic translation initiation factor 3 subunit B from Eremothecium gossypii (strain ATCC 10895 / CBS 109.51 / FGSC 9923 / NRRL Y-1056) (Yeast).